Reading from the N-terminus, the 1406-residue chain is DNA-directed RNA polymerase subunit beta' (1406 aa).

Residues Cys-70, Cys-72, Cys-85, and Cys-88 each contribute to the Zn(2+) site. Mg(2+)-binding residues include Asp-460, Asp-462, and Asp-464. Residues Cys-814, Cys-888, Cys-895, and Cys-898 each contribute to the Zn(2+) site.

It belongs to the RNA polymerase beta' chain family. In terms of assembly, the RNAP catalytic core consists of 2 alpha, 1 beta, 1 beta' and 1 omega subunit. When a sigma factor is associated with the core the holoenzyme is formed, which can initiate transcription. It depends on Mg(2+) as a cofactor. Zn(2+) serves as cofactor.

The catalysed reaction is RNA(n) + a ribonucleoside 5'-triphosphate = RNA(n+1) + diphosphate. Functionally, DNA-dependent RNA polymerase catalyzes the transcription of DNA into RNA using the four ribonucleoside triphosphates as substrates. In Yersinia pseudotuberculosis serotype O:1b (strain IP 31758), this protein is DNA-directed RNA polymerase subunit beta'.